The following is a 310-amino-acid chain: uncharacterized protein (310 aa).

The segment at 1–70 (MAGNSQRRGA…ARGRTDETET (70 aa)) is disordered. The span at 49–62 (AAKRAKAQQRRPAR) shows a compositional bias: basic residues. The S-adenosyl-L-methionine site is built by G262, V282, and L291.

It belongs to the class IV-like SAM-binding methyltransferase superfamily. RNA methyltransferase TrmH family.

This is an uncharacterized protein from Mycobacterium ulcerans (strain Agy99).